The following is a 200-amino-acid chain: Recombination protein RecR (200 aa).

The C4-type zinc-finger motif lies at 60 to 75; the sequence is CVYCQALTEDDVCNIC. In terms of domain architecture, Toprim spans 83–177; the sequence is TKLCIIESML…KISRIGFGVP (95 aa).

Belongs to the RecR family.

Its function is as follows. May play a role in DNA repair. It seems to be involved in an RecBC-independent recombinational process of DNA repair. It may act with RecF and RecO. The polypeptide is Recombination protein RecR (Francisella tularensis subsp. novicida (strain U112)).